The primary structure comprises 120 residues: Autophagy-related protein 8C (120 aa).

The interval 1–20 is disordered; sequence MARSSFKLEHPLERRQAEAN. Gly-117 is lipidated: Phosphatidylethanolamine amidated glycine. Positions 118-120 are cleaved as a propeptide — removed in mature form; sequence LFV.

It belongs to the ATG8 family. Interacts with ATG4. Post-translationally, the C-terminal 3 residues are removed by ATG4 to expose Gly-117 at the C-terminus. The C-terminal Gly is then amidated with phosphatidylethanolamine by an activating system similar to that for ubiquitin.

It is found in the cytoplasmic vesicle. The protein localises to the autophagosome membrane. Its subcellular location is the vacuole membrane. It localises to the cytoplasm. The protein resides in the cytoskeleton. Functionally, ubiquitin-like modifier involved in autophagosomes formation. May mediate the delivery of the autophagosomes to the vacuole via the microtubule cytoskeleton. The chain is Autophagy-related protein 8C (ATG8C) from Oryza sativa subsp. indica (Rice).